Here is a 147-residue protein sequence, read N- to C-terminus: Protein phosphatase 1 regulatory subunit 14B (147 aa).

Over residues 1-15 (MADSGPAGGAALAAP) the composition is skewed to low complexity. Residues 1-55 (MADSGPAGGAALAAPAPGPGSGGAGPRVYFQSPPGAAGEGPGGADDEGPVRRQGK) are disordered. A2 carries the N-acetylalanine modification. S21 is modified (phosphoserine). Y29 is subject to Phosphotyrosine. The residue at position 32 (S32) is a Phosphoserine. T57 is modified (phosphothreonine). The stretch at 61-103 (DRKELRKRLNLEEWILEQLTRLYDCQEEEIPELEIDVDELLDM) forms a coiled coil.

It belongs to the PP1 inhibitor family. Post-translationally, phosphorylated primarily on Thr-57 by PKC (in vitro). An unknown Ser is also phosphorylated by PKC (in vitro).

It localises to the cytoplasm. In terms of biological role, inhibitor of PPP1CA. Has over 50-fold higher inhibitory activity when phosphorylated. This Sus scrofa (Pig) protein is Protein phosphatase 1 regulatory subunit 14B (PPP1R14B).